We begin with the raw amino-acid sequence, 341 residues long: Cysteine and histidine-rich domain-containing protein 1 (341 aa).

Positions 5, 10, 24, 27, 42, 43, 59, 64, 155, 160, 174, 177, 192, 193, 209, and 214 each coordinate Zn(2+). 2 CHORD domains span residues 5 to 64 (CYNK…KGPH) and 155 to 214 (CKNG…RGKH). The interval 61 to 81 (KGPHNQEKPAEPVKPEVKSSL) is disordered. The span at 64 to 81 (HNQEKPAEPVKPEVKSSL) shows a compositional bias: basic and acidic residues. The region spanning 225–314 (VVPCRFDWHQ…AEPMSWARLD (90 aa)) is the CS domain. Positions 313-341 (LDLPPVAPPKEKEKEKDVDSEDECDDDED) are disordered. The segment covering 330-341 (VDSEDECDDDED) has biased composition (acidic residues).

Its function is as follows. Regulates centrosome duplication. The polypeptide is Cysteine and histidine-rich domain-containing protein 1 (chordc1) (Danio rerio (Zebrafish)).